We begin with the raw amino-acid sequence, 502 residues long: Probable mitochondrial-processing peptidase subunit alpha (502 aa).

It belongs to the peptidase M16 family. As to quaternary structure, heterodimer of mas2 (alpha) and mas1 (beta) subunits, forming the mitochondrial processing protease (MPP) in which mas2 is involved in substrate recognition and binding and mas1 is the catalytic subunit.

The protein localises to the mitochondrion matrix. In terms of biological role, substrate recognition and binding subunit of the essential mitochondrial processing protease (MPP), which cleaves the mitochondrial sequence off newly imported precursors proteins. This is Probable mitochondrial-processing peptidase subunit alpha (mas2) from Schizosaccharomyces pombe (strain 972 / ATCC 24843) (Fission yeast).